Here is a 378-residue protein sequence, read N- to C-terminus: Transaldolase 1 (378 aa).

Lysine 146 serves as the catalytic Schiff-base intermediate with substrate.

It belongs to the transaldolase family. Type 2 subfamily.

It is found in the cytoplasm. The enzyme catalyses D-sedoheptulose 7-phosphate + D-glyceraldehyde 3-phosphate = D-erythrose 4-phosphate + beta-D-fructose 6-phosphate. It functions in the pathway carbohydrate degradation; pentose phosphate pathway; D-glyceraldehyde 3-phosphate and beta-D-fructose 6-phosphate from D-ribose 5-phosphate and D-xylulose 5-phosphate (non-oxidative stage): step 2/3. Transaldolase is important for the balance of metabolites in the pentose-phosphate pathway. This Streptomyces avermitilis (strain ATCC 31267 / DSM 46492 / JCM 5070 / NBRC 14893 / NCIMB 12804 / NRRL 8165 / MA-4680) protein is Transaldolase 1.